The primary structure comprises 1396 residues: DNA ligase 6 (1396 aa).

Disordered regions lie at residues Lys441–Pro464 and Met562–Gln599. Short sequence motifs (nuclear localization signal) lie at residues Gly572 to Gly579 and Leu886 to Thr893. Residue Glu1037 coordinates ATP. Lys1039 (N6-AMP-lysine intermediate) is an active-site residue. ATP-binding residues include Arg1044, Arg1060, Glu1092, and Phe1136. Glu1092 is a Mg(2+) binding site. Glu1207 provides a ligand contact to Mg(2+). ATP-binding residues include Lys1212, Arg1225, and Lys1231.

The protein belongs to the ATP-dependent DNA ligase family. Mg(2+) serves as cofactor. As to expression, mostly expressed in buds and flowers, and, to a lower extent, in stems, leaves, siliques and seeds.

It is found in the nucleus. It carries out the reaction ATP + (deoxyribonucleotide)n-3'-hydroxyl + 5'-phospho-(deoxyribonucleotide)m = (deoxyribonucleotide)n+m + AMP + diphosphate.. Functionally, DNA ligase that seals nicks in double-stranded DNA during DNA replication, DNA recombination and DNA repair. Required to maintain seed viability (e.g. longevity and storability) and during seed germination, probably by repairing DNA damage accumulated during seed development, storage and/or imbibition. Facilitates seed germination in cold conditions (2 degrees Celsius) and under oxidative stress (e.g. menadione, a genotoxic agent). Involved in repair of X-ray-induced damage. Limits stable root transformation by A.tumefaciens T-DNA. In Arabidopsis thaliana (Mouse-ear cress), this protein is DNA ligase 6.